The following is a 515-amino-acid chain: MASDTPGFYMDKLNKYRQMHGVAITYKELSTSGPPHDRRFTFQVLIDEKEFPEAKGRSKQEARNAAAKLAVDILDNENKVDCHTSASEQGLFVGNYIGLVNSFAQKKKLSVNYEQCEPNSELPQRFICKCKIGQTMYGTGSGVTKQEAKQLAAKEAYQKLLKSPPKTAGTSSSVVTSTFSGFSSSSSMTSNGVSQSAPGSFSSENVFTNGLGENKRKSGVKVSPDDVQRNKYTLDARFNSDFEDIEEIGLGGFGQVFKAKHRIDGKRYAIKRVKYNTEKAEHEVQALAELNHVNIVQYHSCWEGVDYDPEHSMSDTSRYKTRCLFIQMEFCDKGTLEQWMRNRNQSKVDKALILDLYEQIVTGVEYIHSKGLIHRDLKPGNIFLVDERHIKIGDFGLATALENDGKSRTRRTGTLQYMSPEQLFLKHYGKEVDIFALGLILAELLHTCFTESEKIKFFESLRKGDFSNDIFDNKEKSLLKKLLSEKPKDRPETSEILKTLAEWRNISEKKKRNTC.

An N-acetylalanine modification is found at alanine 2. The DRBM 1 domain maps to 8 to 76 (FYMDKLNKYR…AKLAVDILDN (69 aa)). Lysine 68 participates in a covalent cross-link: Glycyl lysine isopeptide (Lys-Gly) (interchain with G-Cter in ISG15). At threonine 84 the chain carries Phosphothreonine. Positions 95-162 (NYIGLVNSFA…AKEAYQKLLK (68 aa)) constitute a DRBM 2 domain. Tyrosine 96 carries the phosphotyrosine; by autocatalysis modification. A Glycyl lysine isopeptide (Lys-Gly) (interchain with G-Cter in ISG15) cross-link involves residue lysine 154. The residue at position 157 (tyrosine 157) is a Phosphotyrosine; by autocatalysis. Residues 204-224 (ENVFTNGLGENKRKSGVKVSP) form a disordered region. A Phosphothreonine modification is found at threonine 233. The segment at 241–515 (DFEDIEEIGL…ISEKKKRNTC (275 aa)) is interaction with TRAF5. The Protein kinase domain occupies 242–504 (FEDIEEIGLG…EILKTLAEWR (263 aa)). Residue 248-256 (IGLGGFGQV) coordinates ATP. Tyrosine 268 is subject to Phosphotyrosine; by autocatalysis. Residue lysine 271 coordinates ATP. The active-site Proton acceptor is aspartate 376. Residues threonine 409 and threonine 414 each carry the phosphothreonine; by autocatalysis modification. Serine 419 carries the phosphoserine modification.

This sequence belongs to the protein kinase superfamily. Ser/Thr protein kinase family. GCN2 subfamily. As to quaternary structure, homodimer. Interacts with DNAJC3 and STRBP. Forms a complex with FANCA, FANCC, FANCG and HSP70. Interacts with ADAR/ADAR1. The inactive form interacts with NCK1. Interacts (via the kinase catalytic domain) with STAT3 (via SH2 domain), TRAF2 (C-terminus), TRAF5 (C-terminus) and TRAF6 (C-terminus). Interacts with MAP2K6, TARBP2, NLRP1, NLRC4 and AIM2. Interacts (via DRBM 1 domain) with DUS2L (via DRBM domain). Interacts with DHX9 (via N-terminus) and this interaction is dependent upon activation of the kinase. The inactive form interacts with GSN. Interacts with IKBKB/IKKB, NPM1, NLRP3 and IRS1. In terms of processing, autophosphorylated on several Ser, Thr and Tyr residues. Autophosphorylation of Thr-414 is dependent on Thr-409 and is stimulated by dsRNA binding and dimerization. Autophosphorylation apparently leads to the activation of the kinase. Tyrosine autophosphorylation is essential for efficient dsRNA-binding, dimerization, and kinase activation. In terms of tissue distribution, expressed in heart, lung, brain, kidney, testes, thymus and bone marrow.

Its subcellular location is the cytoplasm. The protein localises to the nucleus. The protein resides in the perinuclear region. It carries out the reaction L-seryl-[protein] + ATP = O-phospho-L-seryl-[protein] + ADP + H(+). The catalysed reaction is L-threonyl-[protein] + ATP = O-phospho-L-threonyl-[protein] + ADP + H(+). The enzyme catalyses L-tyrosyl-[protein] + ATP = O-phospho-L-tyrosyl-[protein] + ADP + H(+). Its activity is regulated as follows. Initially produced in an inactive form and is activated by binding to viral dsRNA, which causes dimerization and autophosphorylation in the activation loop and stimulation of function. ISGylation can activate it in the absence of viral infection. Can also be activated by heparin, pro-inflammatory stimuli, growth factors, cytokines, oxidative stress and the cellular protein PRKRA. Activity is markedly stimulated by manganese ions. Activation is blocked by the cellular proteins TARBP2, DUS2L, NPM1, NCK1 and ADAR. IFN-induced dsRNA-dependent serine/threonine-protein kinase that phosphorylates the alpha subunit of eukaryotic translation initiation factor 2 (EIF2S1/eIF-2-alpha) and plays a key role in the innate immune response to viral infection. Inhibits viral replication via the integrated stress response (ISR): EIF2S1/eIF-2-alpha phosphorylation in response to viral infection converts EIF2S1/eIF-2-alpha in a global protein synthesis inhibitor, resulting to a shutdown of cellular and viral protein synthesis, while concomitantly initiating the preferential translation of ISR-specific mRNAs, such as the transcriptional activator ATF4. Exerts its antiviral activity on a wide range of DNA and RNA viruses including west nile virus (WNV), sindbis virus (SV), foot-and-mouth virus (FMDV), semliki Forest virus (SFV) and lymphocytic choriomeningitis virus (LCMV). Also involved in the regulation of signal transduction, apoptosis, cell proliferation and differentiation: phosphorylates other substrates including p53/TP53, PPP2R5A, DHX9, ILF3, and IRS1. In addition to serine/threonine-protein kinase activity, also has tyrosine-protein kinase activity and phosphorylates CDK1 at 'Tyr-4' upon DNA damage, facilitating its ubiquitination and proteasomal degradation. Either as an adapter protein and/or via its kinase activity, can regulate various signaling pathways (p38 MAP kinase, NF-kappa-B and insulin signaling pathways) and transcription factors (JUN, STAT1, STAT3, IRF1, ATF3) involved in the expression of genes encoding pro-inflammatory cytokines and IFNs. Activates the NF-kappa-B pathway via interaction with IKBKB and TRAF family of proteins and activates the p38 MAP kinase pathway via interaction with MAP2K6. Can act as both a positive and negative regulator of the insulin signaling pathway (ISP). Negatively regulates ISP by inducing the inhibitory phosphorylation of insulin receptor substrate 1 (IRS1) at 'Ser-312' and positively regulates ISP via phosphorylation of PPP2R5A which activates FOXO1, which in turn up-regulates the expression of insulin receptor substrate 2 (IRS2). Can regulate NLRP3 inflammasome assembly and the activation of NLRP3, NLRP1, AIM2 and NLRC4 inflammasomes. Plays a role in the regulation of the cytoskeleton by binding to gelsolin (GSN), sequestering the protein in an inactive conformation away from actin. The polypeptide is Interferon-induced, double-stranded RNA-activated protein kinase (Eif2ak2) (Mus musculus (Mouse)).